The sequence spans 647 residues: Putative ankyrin repeat protein L764 (647 aa).

ANK repeat units lie at residues Leu123–Leu154, Leu202–Leu231, Glu233–Glu256, Asn258–Ser284, Ser289–Val319, Asp348–Lys377, Asn401–Leu431, Phe529–Glu558, and Asn588–Asn617.

This chain is Putative ankyrin repeat protein L764, found in Acanthamoeba polyphaga (Amoeba).